The primary structure comprises 132 residues: Snaclec bothroinsularin subunit alpha (132 aa).

Cystine bridges form between Cys2–Cys13, Cys30–Cys127, and Cys102–Cys119. A C-type lectin domain is found at 9–128 (YGQYCYKFFQ…CGQQNPFVCK (120 aa)).

It belongs to the snaclec family. As to quaternary structure, heterodimer of subunits alpha and beta; disulfide-linked. Expressed by the venom gland.

Its subcellular location is the secreted. Its function is as follows. Thrombin and prothrombin (F2) inhibitor. The IC(50) of thrombin-induced platelet aggregation and fibrinocoagulation is 62 and 35 nM, respectively. Its inhibitory activity is at least 10-fold lower than that observed for other thrombin inhibitors. This chain is Snaclec bothroinsularin subunit alpha, found in Bothrops insularis (Golden lancehead).